Reading from the N-terminus, the 253-residue chain is Phosphoglycerate mutase 2 (253 aa).

At Thr3 the chain carries Phosphothreonine. Substrate contacts are provided by residues 10-17, 23-24, Arg62, 89-92, Lys100, and 116-117; these read RHGESTWN, CG, ERHY, and RR. The Tele-phosphohistidine intermediate role is filled by His11. Ser14 is modified (phosphoserine). Glu89 functions as the Proton donor/acceptor in the catalytic mechanism. Ser118 carries the phosphoserine modification. Phosphotyrosine is present on residues Tyr132 and Tyr133. At Ser135 the chain carries Phosphoserine. Thr152 carries the phosphothreonine modification. 187 to 188 provides a ligand contact to substrate; it reads GN.

This sequence belongs to the phosphoglycerate mutase family. BPG-dependent PGAM subfamily. In terms of assembly, homodimer. Interacts with ENO1. In terms of tissue distribution, expressed in the heart and muscle. Not found in the liver and brain.

The catalysed reaction is (2R)-2-phosphoglycerate = (2R)-3-phosphoglycerate. The enzyme catalyses (2R)-3-phospho-glyceroyl phosphate = (2R)-2,3-bisphosphoglycerate + H(+). Functionally, interconversion of 3- and 2-phosphoglycerate with 2,3-bisphosphoglycerate as the primer of the reaction. Can also catalyze the reaction of EC 5.4.2.4 (synthase), but with a reduced activity. The sequence is that of Phosphoglycerate mutase 2 (PGAM2) from Homo sapiens (Human).